A 568-amino-acid polypeptide reads, in one-letter code: MKETEVEDMDTNRKDGKIKKKEKIVNMKNEEVKSTTKSTLADSDEDYSIITLCTKCLSKKLEDNKNRIILDSKAFKDNRLKGRCSVSSNEDPLDNKLNLSPYFDRSQIIQEIILMNNDELSDVYEIDRYKLGKGSYGNVVKAVSKRTGQQRAIKIIEKKKIHNIERLKREILIMKQMDHPNIIKLYEVYEDNEKLYLVLELCDGGELFDKIVKYGSFSEYEAYKIMKQIFSALYYCHSKNIMHRDLKPENILYVDNTEDSPIQIIDWGFASKCMNNHNLKSVVGTPYYIAPEILRGKYDKRCDIWSSGVIMYILLCGYPPFNGKNNDEILKKVEKGEFVFDSNYWARVSDDAKDLICQCLNYNYKERIDVEQVLKHRWFKKFKSNNLIINKTLNKTLIEKFKEFHKLCKIKKLAVTCIAYQLNEKDIGKLKKTFEAFDHNGDGVLTISEIFQCLKVNDNEFDRELYFLLKQLDTDGNGLIDYTEFLAACLDHSIFQQDVICRNAFNVFDLDGDGVITKDELFKILSFSAVQVSFSKEIIENLIKEVDSNNDGFIDYDEFYKMMTGVKE.

In terms of domain architecture, Protein kinase spans 125-379 (EIDRYKLGKG…VEQVLKHRWF (255 aa)). ATP is bound by residues 131–139 (LGKGSYGNV) and K154. Residue D245 is the Proton acceptor of the active site. The J domain autoinhibitory motif motif lies at 400–408 (KFKEFHKLC). The j domain stretch occupies residues 400–435 (KFKEFHKLCKIKKLAVTCIAYQLNEKDIGKLKKTFE). A J domain EF-hand interaction motif motif is present at residues 409-418 (KIKKLAVTCI). 4 EF-hand domains span residues 425–460 (KDIG…NDNE), 462–495 (DREL…HSIF), 496–531 (QQDV…SAVQ), and 534–568 (FSKE…GVKE). D438, N440, D442, E449, D473, D475, N477, E484, D509, D511, D513, E520, D547, N549, D551, and E558 together coordinate Ca(2+).

It belongs to the protein kinase superfamily. Ser/Thr protein kinase family. CDPK subfamily. The cofactor is Mg(2+). In terms of processing, may be palmitoylated. Autophosphorylated in vitro.

The protein localises to the cytoplasm. It localises to the cytoplasmic vesicle. It is found in the secretory vesicle. The protein resides in the microneme membrane. Its subcellular location is the cell membrane. The enzyme catalyses L-seryl-[protein] + ATP = O-phospho-L-seryl-[protein] + ADP + H(+). It carries out the reaction L-threonyl-[protein] + ATP = O-phospho-L-threonyl-[protein] + ADP + H(+). Its activity is regulated as follows. Activated by calcium. Upon calcium binding to the EF-hand domains, the C-terminus of the junction domain (J domain) undergoes a conformational change which results in the dissociation of the pseudo-substrate inhibitory motif from the catalytic domain. This, in turn, may facilitate the autophosphorylation of the activation loop at Thr-285, which leads to the kinase activation. Functionally, calcium-dependent protein kinase which acts as a sensor and effector of intracellular Ca(2+) levels probably in part downstream of cGMP-activated PKG kinase. Plays a central role in host erythrocytes and hepatocytes infection cycles. During the liver stage, involved in sporozoite motility and thus in sporozoite invasion of host hepatocytes, probably together with CDPK1 and CDPK4. Involved in merosome egress from host hepatocytes, probably together with CDPK4. Required for the release of hepatic merozoites from merosomes in the host blood stream. During the asexual blood stage, required for merozoite egress from host erythrocytes by triggering microneme secretion. Phosphorylates transporter NPT1 at late schizont stage. The sequence is that of Calcium-dependent protein kinase 5 from Plasmodium falciparum (isolate 3D7).